The following is a 156-amino-acid chain: Small ribosomal subunit protein uS7 (156 aa).

The protein belongs to the universal ribosomal protein uS7 family. In terms of assembly, part of the 30S ribosomal subunit. Contacts proteins S9 and S11.

One of the primary rRNA binding proteins, it binds directly to 16S rRNA where it nucleates assembly of the head domain of the 30S subunit. Is located at the subunit interface close to the decoding center, probably blocks exit of the E-site tRNA. The chain is Small ribosomal subunit protein uS7 from Aliivibrio fischeri (strain MJ11) (Vibrio fischeri).